The sequence spans 373 residues: Hydrogenase maturation factor HypD (373 aa).

Fe cation is bound by residues C41, C69, and C72.

Belongs to the HypD family. In terms of assembly, monomer. Interacts with HypC. Forms a complex with HypC, or HybG, and HypE. Requires [4Fe-4S] cluster as cofactor.

It functions in the pathway protein modification; [NiFe] hydrogenase maturation. Its function is as follows. Involved in the maturation of [NiFe] hydrogenases. Involved in the biosynthesis of the Fe(CN)(2)CO cofactor. HypD may act as a scaffold on which the Fe(CN)(2)CO cofactor is formed. In complex with HypC, accepts the cyanide ligand generated by HypF and HypE, and also coordinates the carbon monoxide ligand. Required for the formation of all three hydrogenase isoenzymes. This chain is Hydrogenase maturation factor HypD, found in Escherichia coli (strain K12).